We begin with the raw amino-acid sequence, 140 residues long: Ribonuclease P protein component (140 aa).

A disordered region spans residues 33 to 54 (RALKPSSAKKSSLDTAAKTQPA).

This sequence belongs to the RnpA family. As to quaternary structure, consists of a catalytic RNA component (M1 or rnpB) and a protein subunit.

It carries out the reaction Endonucleolytic cleavage of RNA, removing 5'-extranucleotides from tRNA precursor.. Functionally, RNaseP catalyzes the removal of the 5'-leader sequence from pre-tRNA to produce the mature 5'-terminus. It can also cleave other RNA substrates such as 4.5S RNA. The protein component plays an auxiliary but essential role in vivo by binding to the 5'-leader sequence and broadening the substrate specificity of the ribozyme. The sequence is that of Ribonuclease P protein component from Trichormus variabilis (strain ATCC 29413 / PCC 7937) (Anabaena variabilis).